The primary structure comprises 497 residues: MAGNKRVRDAESEQDHAETETVVKDTATTGEVEGSFSDLKLSDGTMKAIGKMGFTQMTAVQTRTIPPLLAGKDVLGAAKTGSGKTLAFLIPAIEMLHSLKFKPRNGTGVIVITPTRELALQIFGVARELMEFHSQTFGIVIGGANRRQEADKLMKGVNILIATPGRLLDHLQNTKGFIFKNLKALVIDEADRILEIGFEDEMRQIIKILPNEDRQSMLFSATQTTKVEDLARISLRPGPLFINVDSEKDTSTADGLEQGYVVCESDKRFLLLFSFLKRNQKKKVIVFLSSCNSVKYYAELLNYIDLPVLELHGKQKQQKRTNTFFEFCNAERGILVCTDVAARGLDIPAVDWIIQFDPPDDPRDYIHRVGRTARGTKGKGKSLMFLTPTELGFLRYLKAAKVPLNEYEFPTNKIANVQAQLEKLIKSNYYLHQIAKDGYRSYLQAYASHSLKTVYQIDKLDLAKVAKSYGFPVPPKVNITIGASGKTPATKKRRTKD.

Positions 1–23 (MAGNKRVRDAESEQDHAETETVV) are disordered. A Q motif motif is present at residues 34-62 (GSFSDLKLSDGTMKAIGKMGFTQMTAVQT). One can recognise a Helicase ATP-binding domain in the interval 65 to 241 (IPPLLAGKDV…RISLRPGPLF (177 aa)). An ATP-binding site is contributed by 78 to 85 (AKTGSGKT). Residues 188–191 (DEAD) carry the DEAD box motif. Residues 255–425 (GLEQGYVVCE…NVQAQLEKLI (171 aa)) form the Helicase C-terminal domain. The Bipartite nuclear localization signal motif lies at 267-283 (KRFLLLFSFLKRNQKKK).

It belongs to the DEAD box helicase family. DDX18/HAS1 subfamily. Associates in the nucleolus with the 60S and pre-60S ribosomal subunits.

Its subcellular location is the nucleus. The protein resides in the nucleolus. It catalyses the reaction ATP + H2O = ADP + phosphate + H(+). Functionally, ATP-dependent RNA helicase involved in 40S ribosomal subunit biogenesis. Required for the processing and cleavage of 35S pre-rRNA at sites A0, A1, and A2, leading to mature 18S rRNA. The chain is ATP-dependent RNA helicase HAS1 (HAS1) from Kluyveromyces lactis (strain ATCC 8585 / CBS 2359 / DSM 70799 / NBRC 1267 / NRRL Y-1140 / WM37) (Yeast).